The chain runs to 229 residues: GTP cyclohydrolase 1 (229 aa).

Residues 1 to 26 form a disordered region; the sequence is MDAKIKPLRGGKPADARPEFQPAELD. Zn(2+) is bound by residues C118, H121, and C189.

Belongs to the GTP cyclohydrolase I family. As to quaternary structure, toroid-shaped homodecamer, composed of two pentamers of five dimers.

It carries out the reaction GTP + H2O = 7,8-dihydroneopterin 3'-triphosphate + formate + H(+). The protein operates within cofactor biosynthesis; 7,8-dihydroneopterin triphosphate biosynthesis; 7,8-dihydroneopterin triphosphate from GTP: step 1/1. This is GTP cyclohydrolase 1 from Rhodopseudomonas palustris (strain BisB5).